The primary structure comprises 736 residues: Poly(A) polymerase gamma (736 aa).

K2 carries the post-translational modification N6-acetyllysine. 2 positions are modified to phosphoserine: S23 and S29. Residues 99-101, T108, 112-114, D166, K227, Y236, and 245-246 contribute to the ATP site; these read FGS, DID, and GV. Mg(2+) contacts are provided by D112, D114, and D166. Residues 506–564 are disordered; the sequence is KQSLSDVNRSSGGLQSKRLSLDSSCLDSSRDTDNGTPFNSPASKSDSPSVGETERNSAE. Positions 509–519 are enriched in polar residues; that stretch reads LSDVNRSSGGL. The segment covering 521-532 has biased composition (low complexity); that stretch reads SKRLSLDSSCLD. At S525 the chain carries Phosphoserine. Over residues 539-555 the composition is skewed to polar residues; that stretch reads NGTPFNSPASKSDSPSV. 2 positions are modified to phosphoserine: S599 and S648. The residue at position 654 (T654) is a Phosphothreonine. A compositionally biased stretch (basic and acidic residues) spans 673-685; that stretch reads DPRTAEERKRKSV. The segment at 673–720 is disordered; that stretch reads DPRTAEERKRKSVDAIGGESMPIPTIDTSRKKRLPSKELPDSSSPVPA. Phosphoserine is present on residues S684 and S708.

It belongs to the poly(A) polymerase family. Mg(2+) is required as a cofactor. Requires Mn(2+) as cofactor. Expressed predominantly in testis, and weakly in other tissues. Overexpressed in several tumors.

It localises to the nucleus. It catalyses the reaction RNA(n) + ATP = RNA(n)-3'-adenine ribonucleotide + diphosphate. In terms of biological role, responsible for the post-transcriptional adenylation of the 3'-terminal of mRNA precursors and several small RNAs including signal recognition particle (SRP) RNA, nuclear 7SK RNA, U2 small nuclear RNA, and ribosomal 5S RNA. The sequence is that of Poly(A) polymerase gamma from Homo sapiens (Human).